The primary structure comprises 159 residues: Small heat shock protein hspM (159 aa).

A sHSP domain is found at 1 to 159; that stretch reads MFVLNFELAG…LSNNIKIQIN (159 aa). The tract at residues 35-101 is disordered; the sequence is MNNNNKNNLQ…NNNNKSSKTN (67 aa). 2 stretches are compositionally biased toward low complexity: residues 36 to 46 and 61 to 95; these read NNNNKNNLQIN and SSSSNNNNNNNNNNNNNNNNNNNNNNNNNSNNNNN.

The protein belongs to the small heat shock protein (HSP20) family.

This chain is Small heat shock protein hspM (hspM), found in Dictyostelium discoideum (Social amoeba).